The following is a 248-amino-acid chain: Triosephosphate isomerase (248 aa).

Positions 11 and 13 each coordinate substrate. Residue His-95 is the Electrophile of the active site. Residue Glu-165 is the Proton acceptor of the active site.

The protein belongs to the triosephosphate isomerase family. In terms of assembly, homodimer.

Its subcellular location is the cytoplasm. The catalysed reaction is D-glyceraldehyde 3-phosphate = dihydroxyacetone phosphate. It catalyses the reaction dihydroxyacetone phosphate = methylglyoxal + phosphate. The protein operates within carbohydrate degradation; glycolysis; D-glyceraldehyde 3-phosphate from glycerone phosphate: step 1/1. It participates in carbohydrate biosynthesis; gluconeogenesis. Triosephosphate isomerase is an extremely efficient metabolic enzyme that catalyzes the interconversion between dihydroxyacetone phosphate (DHAP) and D-glyceraldehyde-3-phosphate (G3P) in glycolysis and gluconeogenesis. Its function is as follows. It is also responsible for the non-negligible production of methylglyoxal a reactive cytotoxic side-product that modifies and can alter proteins, DNA and lipids. The chain is Triosephosphate isomerase (tpi1) from Oryzias latipes (Japanese rice fish).